We begin with the raw amino-acid sequence, 89 residues long: Small ribosomal subunit protein bS20 (89 aa).

The span at 1–12 shows a compositional bias: basic residues; sequence MANIKSAKKRVK. A disordered region spans residues 1–20; sequence MANIKSAKKRVKQTVVRNER.

This sequence belongs to the bacterial ribosomal protein bS20 family.

Binds directly to 16S ribosomal RNA. The protein is Small ribosomal subunit protein bS20 of Xylella fastidiosa (strain 9a5c).